A 628-amino-acid polypeptide reads, in one-letter code: (+)-alpha-pinene synthase, chloroplastic (628 aa).

A chloroplast-targeting transit peptide spans 1–48; it reads MALVSAVPLNSKLCLRRTLFGFSHELKAIHSTVPNLGMCRGGKSIAPS. Asp-379, Asp-383, and Asp-531 together coordinate Mg(2+). The DDXXD motif signature appears at 379 to 383; sequence DDIYD. Residue Ser-539 coordinates K(+).

It belongs to the terpene synthase family. Tpsd subfamily. Mg(2+) is required as a cofactor. Mn(2+) serves as cofactor. The cofactor is K(+).

It is found in the plastid. It localises to the chloroplast. The catalysed reaction is (2E)-geranyl diphosphate = (1R,5R)-alpha-pinene + diphosphate. The protein operates within terpene metabolism; oleoresin biosynthesis. Its function is as follows. Involved in defensive oleoresin formation in conifers in response to insect attack or other injury. Involved in monoterpene (C10) olefins biosynthesis. Produces mainly (+)-alpha-pinene (97%) with a small amount of (-)-alpha-pinene (3%). The protein is (+)-alpha-pinene synthase, chloroplastic (PT30) of Pinus taeda (Loblolly pine).